Consider the following 128-residue polypeptide: Ribonuclease P protein component (128 aa).

This sequence belongs to the RnpA family. As to quaternary structure, consists of a catalytic RNA component (M1 or rnpB) and a protein subunit.

It catalyses the reaction Endonucleolytic cleavage of RNA, removing 5'-extranucleotides from tRNA precursor.. Its function is as follows. RNaseP catalyzes the removal of the 5'-leader sequence from pre-tRNA to produce the mature 5'-terminus. It can also cleave other RNA substrates such as 4.5S RNA. The protein component plays an auxiliary but essential role in vivo by binding to the 5'-leader sequence and broadening the substrate specificity of the ribozyme. The chain is Ribonuclease P protein component from Methylococcus capsulatus (strain ATCC 33009 / NCIMB 11132 / Bath).